A 91-amino-acid chain; its full sequence is MVSSVFDGIFTTPNYPVKAESYAEHLKGSYRNVYESLYNLKDDTGISVLDEHGFNAVNVTITAIIDPAAGEANDRPSKKCGSGNLRVEKLV.

The segment at 71 to 91 (EANDRPSKKCGSGNLRVEKLV) is disordered.

This is an uncharacterized protein from Archaeoglobus fulgidus (strain ATCC 49558 / DSM 4304 / JCM 9628 / NBRC 100126 / VC-16).